A 104-amino-acid chain; its full sequence is MIRKAFVMQVNPDAHEEYQRRHNPIWPELEAVLKSHGAHNYAIYLDKARNLLFATVEIESEERWNAVASTEICQRWWKYMTDVMPANPDNSPVSSELQEVFYLP.

A substrate-binding site is contributed by Tyr18. The active-site Proton donor is His22. Substrate-binding positions include Tyr41 and 76–77 (WW).

The protein belongs to the rhamnose mutarotase family. As to quaternary structure, homodimer.

It is found in the cytoplasm. The enzyme catalyses alpha-L-rhamnose = beta-L-rhamnose. Its pathway is carbohydrate metabolism; L-rhamnose metabolism. In terms of biological role, involved in the anomeric conversion of L-rhamnose. The polypeptide is L-rhamnose mutarotase (Escherichia coli O17:K52:H18 (strain UMN026 / ExPEC)).